Reading from the N-terminus, the 502-residue chain is Cobyric acid synthase (502 aa).

Positions 260 to 433 (ILRVAVCAIP…WHGSLESDGF (174 aa)) constitute a GATase cobBQ-type domain. C341 functions as the Nucleophile in the catalytic mechanism. The active site involves H425.

Belongs to the CobB/CobQ family. CobQ subfamily.

It participates in cofactor biosynthesis; adenosylcobalamin biosynthesis. Catalyzes amidations at positions B, D, E, and G on adenosylcobyrinic A,C-diamide. NH(2) groups are provided by glutamine, and one molecule of ATP is hydrogenolyzed for each amidation. This Streptomyces avermitilis (strain ATCC 31267 / DSM 46492 / JCM 5070 / NBRC 14893 / NCIMB 12804 / NRRL 8165 / MA-4680) protein is Cobyric acid synthase.